The following is a 693-amino-acid chain: DNA ligase (693 aa).

Residues 40 to 44, 89 to 90, and Glu121 contribute to the NAD(+) site; these read DSEYD and SL. Lys123 (N6-AMP-lysine intermediate) is an active-site residue. Arg144, Glu179, Lys295, and Lys319 together coordinate NAD(+). Zn(2+)-binding residues include Cys413, Cys416, Cys431, and Cys437. The 84-residue stretch at 610-693 folds into the BRCT domain; sequence REQNILTGKI…AFIKCLEKEV (84 aa).

This sequence belongs to the NAD-dependent DNA ligase family. LigA subfamily. The cofactor is Mg(2+). Mn(2+) serves as cofactor.

It carries out the reaction NAD(+) + (deoxyribonucleotide)n-3'-hydroxyl + 5'-phospho-(deoxyribonucleotide)m = (deoxyribonucleotide)n+m + AMP + beta-nicotinamide D-nucleotide.. DNA ligase that catalyzes the formation of phosphodiester linkages between 5'-phosphoryl and 3'-hydroxyl groups in double-stranded DNA using NAD as a coenzyme and as the energy source for the reaction. It is essential for DNA replication and repair of damaged DNA. In Rickettsia typhi (strain ATCC VR-144 / Wilmington), this protein is DNA ligase.